The following is a 147-amino-acid chain: Phosphoribosyl-AMP cyclohydrolase (147 aa).

Residue D97 coordinates Mg(2+). Position 98 (C98) interacts with Zn(2+). Residues D99 and D101 each coordinate Mg(2+). Residues C114 and C121 each coordinate Zn(2+).

This sequence belongs to the PRA-CH family. In terms of assembly, homodimer. It depends on Mg(2+) as a cofactor. The cofactor is Zn(2+).

The protein localises to the cytoplasm. The enzyme catalyses 1-(5-phospho-beta-D-ribosyl)-5'-AMP + H2O = 1-(5-phospho-beta-D-ribosyl)-5-[(5-phospho-beta-D-ribosylamino)methylideneamino]imidazole-4-carboxamide. It participates in amino-acid biosynthesis; L-histidine biosynthesis; L-histidine from 5-phospho-alpha-D-ribose 1-diphosphate: step 3/9. In terms of biological role, catalyzes the hydrolysis of the adenine ring of phosphoribosyl-AMP. This Hydrogenovibrio crunogenus (strain DSM 25203 / XCL-2) (Thiomicrospira crunogena) protein is Phosphoribosyl-AMP cyclohydrolase.